A 215-amino-acid polypeptide reads, in one-letter code: RNA pyrophosphohydrolase (215 aa).

Residues 6–149 (GFRPNVGIIL…KRDVYQLALT (144 aa)) form the Nudix hydrolase domain. The Nudix box signature appears at 38–59 (GGIKYGETPMQAMYRELHEETG).

It belongs to the Nudix hydrolase family. RppH subfamily. A divalent metal cation serves as cofactor.

In terms of biological role, accelerates the degradation of transcripts by removing pyrophosphate from the 5'-end of triphosphorylated RNA, leading to a more labile monophosphorylated state that can stimulate subsequent ribonuclease cleavage. This Burkholderia vietnamiensis (strain G4 / LMG 22486) (Burkholderia cepacia (strain R1808)) protein is RNA pyrophosphohydrolase.